Reading from the N-terminus, the 761-residue chain is Phosphoribosylformylglycinamidine synthase subunit PurL (761 aa).

Histidine 58 is a catalytic residue. Positions 61 and 105 each coordinate ATP. Glutamate 107 contributes to the Mg(2+) binding site. Residues 108–111 (SHNH) and arginine 130 contribute to the substrate site. Histidine 109 acts as the Proton acceptor in catalysis. Aspartate 131 lines the Mg(2+) pocket. Substrate is bound at residue glutamine 259. Aspartate 287 contributes to the Mg(2+) binding site. Residue 331–333 (ESQ) participates in substrate binding. Asparagine 519 and glycine 556 together coordinate ATP. Asparagine 557 is a binding site for Mg(2+). Serine 559 is a substrate binding site.

Belongs to the FGAMS family. Monomer. Part of the FGAM synthase complex composed of 1 PurL, 1 PurQ and 2 PurS subunits.

It localises to the cytoplasm. It catalyses the reaction N(2)-formyl-N(1)-(5-phospho-beta-D-ribosyl)glycinamide + L-glutamine + ATP + H2O = 2-formamido-N(1)-(5-O-phospho-beta-D-ribosyl)acetamidine + L-glutamate + ADP + phosphate + H(+). Its pathway is purine metabolism; IMP biosynthesis via de novo pathway; 5-amino-1-(5-phospho-D-ribosyl)imidazole from N(2)-formyl-N(1)-(5-phospho-D-ribosyl)glycinamide: step 1/2. In terms of biological role, part of the phosphoribosylformylglycinamidine synthase complex involved in the purines biosynthetic pathway. Catalyzes the ATP-dependent conversion of formylglycinamide ribonucleotide (FGAR) and glutamine to yield formylglycinamidine ribonucleotide (FGAM) and glutamate. The FGAM synthase complex is composed of three subunits. PurQ produces an ammonia molecule by converting glutamine to glutamate. PurL transfers the ammonia molecule to FGAR to form FGAM in an ATP-dependent manner. PurS interacts with PurQ and PurL and is thought to assist in the transfer of the ammonia molecule from PurQ to PurL. The protein is Phosphoribosylformylglycinamidine synthase subunit PurL of Rhodococcus opacus (strain B4).